A 1128-amino-acid chain; its full sequence is Glutamate receptor-interacting protein 1 (1128 aa).

Serine 43 is modified (phosphoserine). PDZ domains follow at residues valine 53 to leucine 136, threonine 150 to valine 238, leucine 252 to histidine 336, glutamate 472 to valine 561, histidine 573 to glutamate 658, and threonine 673 to threonine 755. Disordered stretches follow at residues glutamine 754 to threonine 798 and methionine 935 to serine 981. Over residues proline 944 to proline 974 the composition is skewed to polar residues. Residues lysine 1004–proline 1086 form the PDZ 7 domain. The span at isoleucine 1093–histidine 1115 shows a compositional bias: polar residues. The tract at residues isoleucine 1093–leucine 1128 is disordered.

Interacts with EPHA7, EPHB2, KIF5A, KIF5B, KIF5C, GRIA2, GRIA3, GRIPAP1/GRASP1, PPFIA1, PPFIA4, FRAS1, PLCD4, PTPRF and liprins-alpha. Can form homomultimers or heteromultimers with GRIP2. Forms a ternary complex with GRIA2 and CSPG4. Interacts with ATAD1 in an ATP-dependent manner. ATAD1-catalyzed ATP hydrolysis disrupts binding to ATAD1 and to GRIA2 and leads to AMPAR complex disassembly. Interacts with EFNB1, EFNB3 and the C-terminal tail of PRLHR. Interacts with SLC30A9. Interacts with BUD23. Forms a complex with NSG1, GRIA2 and STX12; controls the intracellular fate of AMPAR and the endosomal sorting of the GRIA2 subunit toward recycling and membrane targeting. Interacts with NSG1.

Its subcellular location is the cytoplasmic vesicle. The protein localises to the perikaryon. It localises to the cell projection. It is found in the dendrite. The protein resides in the cytoplasm. Its subcellular location is the endomembrane system. The protein localises to the postsynaptic cell membrane. It localises to the postsynaptic density. It is found in the endoplasmic reticulum membrane. May play a role as a localized scaffold for the assembly of a multiprotein signaling complex and as mediator of the trafficking of its binding partners at specific subcellular location in neurons. Through complex formation with NSG1, GRIA2 and STX12 controls the intracellular fate of AMPAR and the endosomal sorting of the GRIA2 subunit toward recycling and membrane targeting. The chain is Glutamate receptor-interacting protein 1 (GRIP1) from Homo sapiens (Human).